The following is an 852-amino-acid chain: Mannosyl-oligosaccharide glucosidase GCS1 (852 aa).

Residues 1–31 (MTGASRRSARGRIKSSSLSPGSDEGSAYPPS) form a disordered region. Over 1-51 (MTGASRRSARGRIKSSSLSPGSDEGSAYPPSIRRGKGKELVSIGAFKTNLK) the chain is Cytoplasmic. Residues 6-12 (RRSARGR) carry the Endoplasmic reticulum targeting motif. A compositionally biased stretch (low complexity) spans 15–26 (SSSLSPGSDEGS). Residues 52–72 (ILVGLIILGIIVIYFVINRLV) traverse the membrane as a helical; Signal-anchor for type II membrane protein segment. Residues 73-852 (RHGLLFDESQ…LIMSEDYPIF (780 aa)) lie on the Lumenal side of the membrane. Residues 91–150 (PAPKVMDLSMFQGEHKESLYWGTYRPHVYFGVRARTPLSLVAGLMWLGVKDEMYVMRHFC) form a required for endoplasmic reticulum targeting region. N-linked (GlcNAc...) asparagine glycosylation is found at Asn282, Asn552, and Asn570. Positions 574–583 (QELNPKTLSS) are enriched in polar residues. A disordered region spans residues 574 to 593 (QELNPKTLSSGLDDYPRASH). Catalysis depends on Asp586, which acts as the Proton donor. Residues Asn633, Asn662, and Asn730 are each glycosylated (N-linked (GlcNAc...) asparagine). Glu819 functions as the Proton acceptor in the catalytic mechanism.

It belongs to the glycosyl hydrolase 63 family. As to expression, constitutively expressed in roots, stems, leaves, flowers and siliques.

The protein resides in the endoplasmic reticulum membrane. The catalysed reaction is N(4)-(alpha-D-Glc-(1-&gt;2)-alpha-D-Glc-(1-&gt;3)-alpha-D-Glc-(1-&gt;3)-alpha-D-Man-(1-&gt;2)-alpha-D-Man-(1-&gt;2)-alpha-D-Man-(1-&gt;3)-[alpha-D-Man-(1-&gt;2)-alpha-D-Man-(1-&gt;3)-[alpha-D-Man-(1-&gt;2)-alpha-D-Man-(1-&gt;6)]-alpha-D-Man-(1-&gt;6)]-beta-D-Man-(1-&gt;4)-beta-D-GlcNAc-(1-&gt;4)-beta-D-GlcNAc)-L-asparaginyl-[protein] + H2O = N(4)-(alpha-D-Glc-(1-&gt;3)-alpha-D-Glc-(1-&gt;3)-alpha-D-Man-(1-&gt;2)-alpha-D-Man-(1-&gt;2)-alpha-D-Man-(1-&gt;3)-[alpha-D-Man-(1-&gt;2)-alpha-D-Man-(1-&gt;3)-[alpha-D-Man-(1-&gt;2)-alpha-D-Man-(1-&gt;6)]-alpha-D-Man-(1-&gt;6)]-beta-D-Man-(1-&gt;4)-beta-D-GlcNAc-(1-&gt;4)-beta-D-GlcNAc)-L-asparaginyl-[protein] + beta-D-glucose. The protein operates within glycan metabolism; N-glycan degradation. Its function is as follows. Cleaves the distal alpha 1,2-linked glucose residue from the Glc(3)Man(9)GlcNAc(2) oligosaccharide precursor. Required for the accumulation of seed storage proteins, the formation of protein bodies, cell differentiation, cellulose biosynthesis and organization (in cell walls), cell shape determination and organization (e.g. epidermal cells), and embryo development. Involved in root development. The polypeptide is Mannosyl-oligosaccharide glucosidase GCS1 (GCS1) (Arabidopsis thaliana (Mouse-ear cress)).